Here is a 958-residue protein sequence, read N- to C-terminus: Glycine dehydrogenase (decarboxylating) 2 (958 aa).

Lysine 707 carries the post-translational modification N6-(pyridoxal phosphate)lysine.

The protein belongs to the GcvP family. The glycine cleavage system is composed of four proteins: P, T, L and H. The cofactor is pyridoxal 5'-phosphate.

It catalyses the reaction N(6)-[(R)-lipoyl]-L-lysyl-[glycine-cleavage complex H protein] + glycine + H(+) = N(6)-[(R)-S(8)-aminomethyldihydrolipoyl]-L-lysyl-[glycine-cleavage complex H protein] + CO2. Functionally, the glycine cleavage system catalyzes the degradation of glycine. The P protein binds the alpha-amino group of glycine through its pyridoxal phosphate cofactor; CO(2) is released and the remaining methylamine moiety is then transferred to the lipoamide cofactor of the H protein. This Pseudomonas aeruginosa (strain ATCC 15692 / DSM 22644 / CIP 104116 / JCM 14847 / LMG 12228 / 1C / PRS 101 / PAO1) protein is Glycine dehydrogenase (decarboxylating) 2 (gcvP2).